The primary structure comprises 662 residues: DNA ligase (662 aa).

NAD(+) is bound by residues D31–D35, S80–L81, and E109. K111 (N6-AMP-lysine intermediate) is an active-site residue. NAD(+) is bound by residues R132, E166, K282, and K306. The Zn(2+) site is built by C400, C403, C418, and C423. Residues K581–I662 enclose the BRCT domain.

It belongs to the NAD-dependent DNA ligase family. LigA subfamily. Mg(2+) is required as a cofactor. It depends on Mn(2+) as a cofactor.

It catalyses the reaction NAD(+) + (deoxyribonucleotide)n-3'-hydroxyl + 5'-phospho-(deoxyribonucleotide)m = (deoxyribonucleotide)n+m + AMP + beta-nicotinamide D-nucleotide.. In terms of biological role, DNA ligase that catalyzes the formation of phosphodiester linkages between 5'-phosphoryl and 3'-hydroxyl groups in double-stranded DNA using NAD as a coenzyme and as the energy source for the reaction. It is essential for DNA replication and repair of damaged DNA. This chain is DNA ligase, found in Thermoanaerobacter pseudethanolicus (strain ATCC 33223 / 39E) (Clostridium thermohydrosulfuricum).